Here is a 400-residue protein sequence, read N- to C-terminus: Enoyl-[acyl-carrier-protein] reductase [NADH] (400 aa).

NAD(+) is bound by residues 48-53, 74-75, 111-112, and 139-140; these read GSSSGY, FE, DA, and LA. Substrate is bound at residue Y225. Y235 (proton donor) is an active-site residue. NAD(+) contacts are provided by residues K244 and 273–275; that span reads VVT.

The protein belongs to the TER reductase family. In terms of assembly, monomer.

It catalyses the reaction a 2,3-saturated acyl-[ACP] + NAD(+) = a (2E)-enoyl-[ACP] + NADH + H(+). It participates in lipid metabolism; fatty acid biosynthesis. Functionally, involved in the final reduction of the elongation cycle of fatty acid synthesis (FAS II). Catalyzes the reduction of a carbon-carbon double bond in an enoyl moiety that is covalently linked to an acyl carrier protein (ACP). This is Enoyl-[acyl-carrier-protein] reductase [NADH] from Shewanella denitrificans (strain OS217 / ATCC BAA-1090 / DSM 15013).